We begin with the raw amino-acid sequence, 394 residues long: MTDSNRIRLTWISFFSYALTGALVIVTGMVMGNIAEYFNLPISSMSNTFTFLNTGILVSIFLNAWLMEIIPLKRQLVFGFILMILAIAGLMVGHNLAIFSACMFVLGVVSGITMSIGTFLITHIYTGRQRGSRLLFTDSFFSMAGMVFPIIAATLLAQHVAWYWVYACIGVLYLAIFILTLCSDFPQLGKQAVGDSQPVRKEKWGIGVLFLSIAALCYILGQLGFIQWVPEYAAKRFGMSIEESGGLVSNFWTAYMVGMWFFSVALRFFDLQRIVTVLAALSTFMMYMFVSSQQSAMLSMYILGLGFVSSAIYTTLITLGSQQTKVSSPKLVNFILTCGTIGTMLTFVVTGPIVAHSGAHAALATANGLYLVVFVMCVLLGFVTKHRLHGHAAK.

The next 12 helical transmembrane spans lie at 11–31 (WISF…GMVM), 51–71 (FLNT…EIIP), 76–96 (LVFG…GHNL), 101–121 (ACMF…TFLI), 134–154 (LLFT…IAAT), 160–180 (VAWY…FILT), 206–226 (IGVL…LGFI), 246–266 (GLVS…SVAL), 274–294 (IVTV…SSQQ), 297–317 (MLSM…TTLI), 334–354 (FILT…GPIV), and 363–383 (LATA…LGFV).

Belongs to the major facilitator superfamily. TsgA family.

It localises to the cell inner membrane. The protein is Protein TsgA homolog of Edwardsiella ictaluri (strain 93-146).